The sequence spans 539 residues: Chaperonin GroEL 1 (539 aa).

ATP is bound by residues 29 to 32 (TLGP), 86 to 90 (DGTTT), Gly-413, and Asp-495.

This sequence belongs to the chaperonin (HSP60) family. In terms of assembly, forms a cylinder of 14 subunits composed of two heptameric rings stacked back-to-back. Interacts with the co-chaperonin GroES.

It is found in the cytoplasm. The enzyme catalyses ATP + H2O + a folded polypeptide = ADP + phosphate + an unfolded polypeptide.. Together with its co-chaperonin GroES, plays an essential role in assisting protein folding. The GroEL-GroES system forms a nano-cage that allows encapsulation of the non-native substrate proteins and provides a physical environment optimized to promote and accelerate protein folding. The polypeptide is Chaperonin GroEL 1 (Mycobacterium bovis (strain ATCC BAA-935 / AF2122/97)).